The chain runs to 219 residues: Cytidylate kinase (219 aa).

10–18 (GPAAAGKST) serves as a coordination point for ATP.

This sequence belongs to the cytidylate kinase family. Type 1 subfamily.

The protein localises to the cytoplasm. The catalysed reaction is CMP + ATP = CDP + ADP. The enzyme catalyses dCMP + ATP = dCDP + ADP. The chain is Cytidylate kinase from Staphylococcus aureus (strain JH9).